We begin with the raw amino-acid sequence, 192 residues long: Cytochrome c oxidase assembly protein CtaG (192 aa).

At methionine 1–threonine 9 the chain is on the cytoplasmic side. The helical; Signal-anchor for type II membrane protein transmembrane segment at alanine 10–phenylalanine 30 threads the bilayer. Topologically, residues tyrosine 31–asparagine 192 are periplasmic.

This sequence belongs to the COX11/CtaG family.

The protein localises to the cell inner membrane. Functionally, exerts its effect at some terminal stage of cytochrome c oxidase synthesis, probably by being involved in the insertion of the copper B into subunit I. The chain is Cytochrome c oxidase assembly protein CtaG from Cereibacter sphaeroides (strain ATCC 17025 / ATH 2.4.3) (Rhodobacter sphaeroides).